We begin with the raw amino-acid sequence, 294 residues long: Protein C3orf33 homolog (294 aa).

Position 2 is an N-acetylalanine (A2). A helical transmembrane segment spans residues 36–53 (LVQNISTGMAIAGIMLLI). The interval 244 to 271 (KPAGADLGSTKDSYHDSRRRASGKGKDS) is disordered.

The protein resides in the membrane. In terms of biological role, may play a role in transcription regulation. This Mus musculus (Mouse) protein is Protein C3orf33 homolog.